Consider the following 2603-residue polypeptide: Squalestatin tetraketide synthase (2603 aa).

One can recognise a Ketosynthase family 3 (KS3) domain in the interval 29–455; that stretch reads TIPIAIIGMS…GANAHVILES (427 aa). Residues cysteine 202, histidine 337, and histidine 377 each act as for beta-ketoacyl synthase activity in the active site. Residues 463–512 form a disordered region; sequence IANGSGRSNGTGNGHNGANGTTNGHNGTNGTTNGHFDATQATNGHYGTDE. The span at 469 to 479 shows a compositional bias: gly residues; that stretch reads RSNGTGNGHNG. Positions 480–497 are enriched in low complexity; the sequence is ANGTTNGHNGTNGTTNGH. The segment at 608-931 is malonyl-CoA:ACP transacylase (MAT) domain; it reads VFTGQGAQWF…PYISCLLRGQ (324 aa). Residues 1000–1138 are N-terminal hotdog fold; it reads HDLLGSLIVG…GRITIEFDTS (139 aa). The region spanning 1000 to 1314 is the PKS/mFAS DH domain; the sequence is HDLLGSLIVG…NQSVGQMAPQ (315 aa). The tract at residues 1000 to 1314 is dehydratase (DH) domain; the sequence is HDLLGSLIVG…NQSVGQMAPQ (315 aa). The active-site Proton acceptor; for dehydratase activity is the histidine 1032. The interval 1157-1314 is C-terminal hotdog fold; sequence LMRSVDPSNL…NQSVGQMAPQ (158 aa). Catalysis depends on aspartate 1223, which acts as the Proton donor; for dehydratase activity. Residues 1465–1665 are methyltransferase (CMet) domain; that stretch reads LYRYYTDAIK…GLDIELRDCD (201 aa). The enoyl reductase (ER) (ER) domain stretch occupies residues 1892-2205; it reads GLIDTLQFSK…AGKHMGKIVI (314 aa). The interval 2228-2406 is ketoreductase (KR) domain; the sequence is ASYLIVGGLG…AVSIDLGMVQ (179 aa). The 78-residue stretch at 2516–2593 folds into the Carrier domain; sequence EAIDVVGRAI…ALATTVATKS (78 aa). The residue at position 2553 (serine 2553) is an O-(pantetheine 4'-phosphoryl)serine.

It functions in the pathway secondary metabolite biosynthesis. Highly reducing polyketide synthase (HR-PKS); part of the gene cluster that mediates the biosynthesis of squalestatin S1 (SQS1, also known as zaragozic acid A), a lead compound for the treatment of hyper-cholesterolemia by targeting squalene synthase (SS). Pks1 is responsible for the biosynthesis of the tetraketide sidechain of SQS1. The biosynthesis must involve 3 rounds of chain extension. After the first and second rounds methyl-transfer occurs, and in all rounds of extension the ketoreductase and dehydratase are active. The enoyl reductase and C-MeT are not active in the final round of extension. The sequence is that of Squalestatin tetraketide synthase from Phoma sp. (strain C2932).